The following is a 341-amino-acid chain: N-acetyl-gamma-glutamyl-phosphate reductase (341 aa).

C146 is an active-site residue.

The protein belongs to the NAGSA dehydrogenase family. Type 1 subfamily.

Its subcellular location is the cytoplasm. The enzyme catalyses N-acetyl-L-glutamate 5-semialdehyde + phosphate + NADP(+) = N-acetyl-L-glutamyl 5-phosphate + NADPH + H(+). It functions in the pathway amino-acid biosynthesis; L-arginine biosynthesis; N(2)-acetyl-L-ornithine from L-glutamate: step 3/4. Catalyzes the NADPH-dependent reduction of N-acetyl-5-glutamyl phosphate to yield N-acetyl-L-glutamate 5-semialdehyde. The sequence is that of N-acetyl-gamma-glutamyl-phosphate reductase from Limosilactobacillus fermentum (strain NBRC 3956 / LMG 18251) (Lactobacillus fermentum).